Reading from the N-terminus, the 918-residue chain is Chaperone protein ClpC1, chloroplastic (918 aa).

The Clp R domain occupies phenylalanine 88–glutamate 230. 2 repeat regions span residues phenylalanine 91–glycine 156 and phenylalanine 166–glutamate 230. The tract at residues leucine 251–proline 498 is i. Glycine 296 to threonine 303 contacts ATP. Positions aspartate 505–glutamine 540 constitute a UVR domain. Positions valine 565–serine 756 are II. Glycine 639–serine 646 is a binding site for ATP.

This sequence belongs to the ClpA/ClpB family. ClpC subfamily. In terms of tissue distribution, widely expressed.

Its subcellular location is the plastid. The protein resides in the chloroplast. Molecular chaperone that may interact with a ClpP-like protease involved in degradation of denatured proteins in the chloroplast. The protein is Chaperone protein ClpC1, chloroplastic (CLPC1) of Oryza sativa subsp. japonica (Rice).